The sequence spans 213 residues: 3,4-dihydroxy-2-butanone 4-phosphate synthase (213 aa).

D-ribulose 5-phosphate-binding positions include 37 to 38 (RE), aspartate 42, 150 to 154 (RPGHT), and glutamate 174. Residue glutamate 38 participates in Mg(2+) binding. Histidine 153 is a binding site for Mg(2+).

Belongs to the DHBP synthase family. Homodimer. It depends on Mg(2+) as a cofactor. Mn(2+) is required as a cofactor.

The catalysed reaction is D-ribulose 5-phosphate = (2S)-2-hydroxy-3-oxobutyl phosphate + formate + H(+). The protein operates within cofactor biosynthesis; riboflavin biosynthesis; 2-hydroxy-3-oxobutyl phosphate from D-ribulose 5-phosphate: step 1/1. Catalyzes the conversion of D-ribulose 5-phosphate to formate and 3,4-dihydroxy-2-butanone 4-phosphate. The sequence is that of 3,4-dihydroxy-2-butanone 4-phosphate synthase from Clostridium botulinum (strain ATCC 19397 / Type A).